A 432-amino-acid polypeptide reads, in one-letter code: Mitochondrial distribution and morphology protein 12 (432 aa).

Positions 1 to 432 (MSIEVDWRAA…VFPSFWTFLI (432 aa)) constitute an SMP-LTD domain. 2 disordered regions span residues 182–273 (WTDP…PRMR) and 354–377 (QQEA…PKRQ). Residues 214–234 (TSNPTSRPSTSSTLPSHPSAS) are compositionally biased toward low complexity. Composition is skewed to basic and acidic residues over residues 243–253 (TGKEHGSLAED) and 355–364 (QEARGQDDRP).

Belongs to the MDM12 family. Component of the ER-mitochondria encounter structure (ERMES) or MDM complex, composed of mmm1, mdm10, mdm12 and mdm34. A mmm1 homodimer associates with one molecule of mdm12 on each side in a pairwise head-to-tail manner, and the SMP-LTD domains of mmm1 and mdm12 generate a continuous hydrophobic tunnel for phospholipid trafficking.

It localises to the mitochondrion outer membrane. The protein localises to the endoplasmic reticulum membrane. Component of the ERMES/MDM complex, which serves as a molecular tether to connect the endoplasmic reticulum (ER) and mitochondria. Components of this complex are involved in the control of mitochondrial shape and protein biogenesis, and function in nonvesicular lipid trafficking between the ER and mitochondria. Mdm12 is required for the interaction of the ER-resident membrane protein MMM1 and the outer mitochondrial membrane-resident beta-barrel protein mdm10. The mdm12-mmm1 subcomplex functions in the major beta-barrel assembly pathway that is responsible for biogenesis of all mitochondrial outer membrane beta-barrel proteins, and acts in a late step after the SAM complex. The mdm10-mdm12-mmm1 subcomplex further acts in the TOM40-specific pathway after the action of the mdm12-mmm1 complex. Essential for establishing and maintaining the structure of mitochondria and maintenance of mtDNA nucleoids. In Aspergillus flavus (strain ATCC 200026 / FGSC A1120 / IAM 13836 / NRRL 3357 / JCM 12722 / SRRC 167), this protein is Mitochondrial distribution and morphology protein 12.